Consider the following 374-residue polypeptide: GDSL esterase/lipase At1g71250 (374 aa).

The first 28 residues, 1 to 28, serve as a signal peptide directing secretion; the sequence is MNTNRKKMKVHIGGYVLILALTVSVILQ. Ser-48 serves as the catalytic Nucleophile. Asn-162 carries N-linked (GlcNAc...) asparagine glycosylation. Catalysis depends on residues Asp-338 and His-341.

Belongs to the 'GDSL' lipolytic enzyme family.

The protein resides in the secreted. The sequence is that of GDSL esterase/lipase At1g71250 from Arabidopsis thaliana (Mouse-ear cress).